Here is a 137-residue protein sequence, read N- to C-terminus: ATP synthase epsilon chain (137 aa).

Belongs to the ATPase epsilon chain family. In terms of assembly, F-type ATPases have 2 components, CF(1) - the catalytic core - and CF(0) - the membrane proton channel. CF(1) has five subunits: alpha(3), beta(3), gamma(1), delta(1), epsilon(1). CF(0) has three main subunits: a, b and c.

It localises to the cellular thylakoid membrane. In terms of biological role, produces ATP from ADP in the presence of a proton gradient across the membrane. This chain is ATP synthase epsilon chain, found in Trichodesmium erythraeum (strain IMS101).